The primary structure comprises 363 residues: Inositol-3-phosphate synthase (363 aa).

NAD(+) is bound by residues D68, A127, Y147, S190, D225, and K238.

Belongs to the myo-inositol 1-phosphate synthase family. Monomer. It depends on NAD(+) as a cofactor.

The catalysed reaction is D-glucose 6-phosphate = 1D-myo-inositol 3-phosphate. It functions in the pathway polyol metabolism; myo-inositol biosynthesis; myo-inositol from D-glucose 6-phosphate: step 1/2. In terms of biological role, key enzyme in myo-inositol biosynthesis pathway that catalyzes the conversion of glucose 6-phosphate to 1D-myo-inositol 3-phosphate in a NAD-dependent manner. Plays a key role in oxidative stress resistance as its product is the precursor of the protective antioxidant mycothiol (MSH or AcCys-GlcN-Ins). The protein is Inositol-3-phosphate synthase of Corynebacterium glutamicum (strain ATCC 13032 / DSM 20300 / JCM 1318 / BCRC 11384 / CCUG 27702 / LMG 3730 / NBRC 12168 / NCIMB 10025 / NRRL B-2784 / 534).